Reading from the N-terminus, the 95-residue chain is uncharacterized protein (95 aa).

An N-terminal signal peptide occupies residues 1-19 (MAILMLSLQLILLLIPSIS). Residues N38 and N41 are each glycosylated (N-linked (GlcNAc...) asparagine).

The protein localises to the secreted. This is an uncharacterized protein from Homo sapiens (Human).